Here is a 190-residue protein sequence, read N- to C-terminus: dCTP deaminase, dUMP-forming (190 aa).

Residues 101-106 (KSSLGR), aspartate 119, 127-129 (TLE), glutamine 148, tyrosine 162, and glutamine 174 contribute to the dCTP site. Residue glutamate 129 is the Proton donor/acceptor of the active site. Residues 163–190 (GSTRVGSKYQGQRGPTPSRSYQNFITST) are disordered. Residues 171–190 (YQGQRGPTPSRSYQNFITST) are compositionally biased toward polar residues.

Belongs to the dCTP deaminase family. Homotrimer.

It carries out the reaction dCTP + 2 H2O = dUMP + NH4(+) + diphosphate. It functions in the pathway pyrimidine metabolism; dUMP biosynthesis; dUMP from dCTP: step 1/1. In terms of biological role, bifunctional enzyme that catalyzes both the deamination of dCTP to dUTP and the hydrolysis of dUTP to dUMP without releasing the toxic dUTP intermediate. In Mycolicibacterium paratuberculosis (strain ATCC BAA-968 / K-10) (Mycobacterium paratuberculosis), this protein is dCTP deaminase, dUMP-forming.